A 455-amino-acid chain; its full sequence is T-box protein VegT-B (455 aa).

The T-box DNA-binding region spans 57 to 230 (LWTQFHQEGT…HNPFAKGFRE (174 aa)). Over residues 229-241 (REQERSHKRDDVL) the composition is skewed to basic and acidic residues. 2 disordered regions span residues 229–276 (REQE…RIKE) and 295–350 (ANQG…RRLT). Polar residues predominate over residues 308–326 (GVNQEQQVPTSSSNFYIKS).

In terms of assembly, forms a repression complex on the promoters of the nodal/nr1 and siamois genes with the maternal factors tcf7l1/tcf3 and pouf5.1/oct-25. Interacts (via C-terminus) with tcf7l1/tcf3 (via N-terminus). Also interacts with the other POU-domain transcription factors pou5f1.2/oct-91 and pou5f1.3/oct-60. As to expression, maternally localized to the vegetal hemisphere of oocytes. Zygotic expression parallels blastopore formation and shifts from dorsal expression in the marginal zone of late blastula and early gastrula stages to a ventral/lateral expression at later stages. During neurula and tailbud stages, expressed in the posterior and anterior ends of the embryo. During tailbud stages, expressed in a subset of interneurons in the neural tube.

It localises to the nucleus. Transcription factor required for both mesoderm and endoderm formation in the embryo; signaling determinants and concentration levels may determine which germ layer is formed. Acts together with beta-catenin to activate genes that are responsible for mesoderm induction including wnt-8, eomes t/bra, siamois, mix1 and sox17. Directly binds to promoter DNA. Patterns the mesoderm along the dorsoventral and posterior axis. Activates siamois gene transcription when alone or in combination with beta-catenin, but inhibits siamois transcription in combination with pou5f1.1/oct-25. In Xenopus laevis (African clawed frog), this protein is T-box protein VegT-B (vegt-b).